Consider the following 85-residue polypeptide: DNA-directed RNA polymerase subunit Rpo11 (85 aa).

This sequence belongs to the archaeal Rpo11/eukaryotic RPB11/RPC19 RNA polymerase subunit family. As to quaternary structure, part of the RNA polymerase complex.

It is found in the cytoplasm. The catalysed reaction is RNA(n) + a ribonucleoside 5'-triphosphate = RNA(n+1) + diphosphate. In terms of biological role, DNA-dependent RNA polymerase (RNAP) catalyzes the transcription of DNA into RNA using the four ribonucleoside triphosphates as substrates. This Methanothermobacter thermautotrophicus (strain ATCC 29096 / DSM 1053 / JCM 10044 / NBRC 100330 / Delta H) (Methanobacterium thermoautotrophicum) protein is DNA-directed RNA polymerase subunit Rpo11.